The sequence spans 333 residues: MATGGYRSGGSTTTDFLEEWKAKREKMRAKQNPAGPGSSGGDPAAKSPAGSLTPTAVAGTSELNHGPAGAAAPAAPAPGALNCAHGSSTLPRAAPGSRRAEDECPSAAAASGAPGSRGDEEEPDSAREKGRSSGPSARKGKGQIEKRKLREKRRSTGVVNIPAAECLDEYEDDEAGQKERKREDAITQQNTIQNEAATLPDPGTSYLPQDPSRTVPGRYKSTTSAPEDEISNRYPRTDRSGFSRHNRDANAPASFSSSSTLEKRIEDLEKEVVRERQENLRLVRLMQDKEEMIGKLKEEIDLLNRDLDDMEDENEQLKQENKTLLKVVGQLTR.

Low complexity-rich tracts occupy residues Met1–Thr14, Pro33–Ser51, Gly66–Ala80, and Pro105–Ser116. Residues Met1 to Glu262 form a disordered region. The B30.2/SPRY domain-binding motif motif lies at Glu62–Gly66. Residues Arg138–Arg154 carry the Nuclear localization signal motif. Residues Arg138–Ala196 are selective for apoptosis induction in cancer cells (SAC). Residue Thr156 is modified to Phosphothreonine; by PKA. The segment covering Ala175–Ala185 has biased composition (basic and acidic residues). Residues Ile186–Ala196 show a composition bias toward polar residues. Ser224 is subject to Phosphoserine. Positions Pro235 to Asp248 are enriched in basic and acidic residues. Residues Phe255–Arg333 are a coiled coil. A leucine-zipper region spans residues Ile293–Arg333.

In terms of assembly, homooligomer. Interacts (via the C-terminal region) with WT1. Interacts with THAP1. Interacts with AATF. Interacts with BACE1. Interacts with SPSB1 (via B30.2/SPRY domain); this interaction is direct and occurs in association with the Elongin BC complex. Interacts with SPSB2 (via B30.2/SPRY domain); this interaction occurs in association with the Elongin BC complex. Interacts with SPSB4 (via B30.2/SPRY domain); this interaction occurs in association with the Elongin BC complex. Component of a ternary complex composed of SQSTM1 and PRKCZ. Interacts with actin. Preferentially phosphorylated at the Thr-156 by PKC in cancer cells.

The protein resides in the cytoplasm. It is found in the nucleus. In terms of biological role, pro-apoptotic protein capable of selectively inducing apoptosis in cancer cells, sensitizing the cells to diverse apoptotic stimuli and causing regression of tumors in animal models. Induces apoptosis in certain cancer cells by activation of the Fas prodeath pathway and coparallel inhibition of NF-kappa-B transcriptional activity. Inhibits the transcriptional activation and augments the transcriptional repression mediated by WT1. Down-regulates the anti-apoptotic protein BCL2 via its interaction with WT1. Also seems to be a transcriptional repressor by itself. May be directly involved in regulating the amyloid precursor protein (APP) cleavage activity of BACE1. In Mus musculus (Mouse), this protein is PRKC apoptosis WT1 regulator protein (Pawr).